The sequence spans 197 residues: Protein GrpE (197 aa).

The segment covering 1–27 (MTKQEKAENQEKPTEETVEETPKKETP) has biased composition (basic and acidic residues). Residues 1 to 50 (MTKQEKAENQEKPTEETVEETPKKETPFEPVMEADEVEETTEAQAPVEEA) form a disordered region. Residues 32–41 (MEADEVEETT) are compositionally biased toward acidic residues.

The protein belongs to the GrpE family. Homodimer.

It is found in the cytoplasm. Participates actively in the response to hyperosmotic and heat shock by preventing the aggregation of stress-denatured proteins, in association with DnaK and GrpE. It is the nucleotide exchange factor for DnaK and may function as a thermosensor. Unfolded proteins bind initially to DnaJ; upon interaction with the DnaJ-bound protein, DnaK hydrolyzes its bound ATP, resulting in the formation of a stable complex. GrpE releases ADP from DnaK; ATP binding to DnaK triggers the release of the substrate protein, thus completing the reaction cycle. Several rounds of ATP-dependent interactions between DnaJ, DnaK and GrpE are required for fully efficient folding. The sequence is that of Protein GrpE from Latilactobacillus sakei (Lactobacillus sakei).